The following is a 453-amino-acid chain: Pup--protein ligase (453 aa).

Mg(2+) is bound at residue Glu-9. Arg-53 lines the ATP pocket. Tyr-55 contributes to the Mg(2+) binding site. Asp-57 serves as the catalytic Proton acceptor. Glu-63 contributes to the Mg(2+) binding site. ATP is bound by residues Thr-66 and Trp-420.

This sequence belongs to the Pup ligase/Pup deamidase family. Pup-conjugating enzyme subfamily.

The catalysed reaction is ATP + [prokaryotic ubiquitin-like protein]-L-glutamate + [protein]-L-lysine = ADP + phosphate + N(6)-([prokaryotic ubiquitin-like protein]-gamma-L-glutamyl)-[protein]-L-lysine.. It participates in protein degradation; proteasomal Pup-dependent pathway. The protein operates within protein modification; protein pupylation. Functionally, catalyzes the covalent attachment of the prokaryotic ubiquitin-like protein modifier Pup to the proteasomal substrate proteins, thereby targeting them for proteasomal degradation. This tagging system is termed pupylation. The ligation reaction involves the side-chain carboxylate of the C-terminal glutamate of Pup and the side-chain amino group of a substrate lysine. This chain is Pup--protein ligase, found in Nocardioides sp. (strain ATCC BAA-499 / JS614).